A 117-amino-acid chain; its full sequence is Eukaryotic translation initiation factor 4E-binding protein (117 aa).

2 positions are modified to phosphothreonine: Thr-37 and Thr-46. Residues 54 to 60 (YERAFMK) carry the YXXXXLphi motif; atypical motif. Ser-65 carries the phosphoserine modification. Thr-70 bears the Phosphothreonine mark.

The protein belongs to the eIF4E-binding protein family. Hypophosphorylated Thor/4E-BP competes with eIF4G1 to interact with eIF4E1; insulin stimulated Akt1 or Tor phosphorylation of Thor/4E-BP causes dissociation of the complex allowing eIF4G1 to bind and consequent initiation of translation. Post-translationally, phosphorylation at Thr-37, Thr-46, Ser-65 and Thr-70, corresponding to the hyperphosphorylated form, impairs its ability to prevent the interaction between eIF4G1 and eIF4E1, without affecting its interaction with free eIF4E1. Phosphorylated in rtesponse to insulin. Phosphorylation at Thr-46 is regulated by Tor and constitutes the major phosphorylation event that regulates activity. As to expression, widely expressed.

Its function is as follows. Repressor of translation initiation that regulates eIF4E1 activity by preventing its assembly into the eIF4F complex. Hypophosphorylated form competes with eIF4G1 and strongly binds to eIF4E1, leading to repress translation. In contrast, hyperphosphorylated form dissociates from eIF4E1, allowing interaction between eIF4G1 and eIF4E1, leading to initiation of translation. Acts as a regulator of various biological processes, such as innate immunity, cell growth or synaptic transmission. Acts downstream of phosphoinositide-3-kinase (PI3K) to regulate cell growth. Extends lifespan upon dietary restriction by regulating the mitochondrial translation. Acts as a regulator of lifespan in response to cold by regulating the mitochondrial translation. Acts as a negative regulator of presynaptic release of neurotransmitter in motor neurons: Thor expression is induced in response to insulin signaling, leading to prevent of translation of complexin (cpx), a protein known to regulate the exocytosis of synaptic vesicles. Acts as a negative regulator of synaptic strength at the neuromuscular junction: Thor expression in response to acute fasting prevents translation, thereby suppressing retrograde synaptic enhancement. This chain is Eukaryotic translation initiation factor 4E-binding protein, found in Drosophila melanogaster (Fruit fly).